We begin with the raw amino-acid sequence, 248 residues long: MDYHIAILNADTPMVEITSAYGDYADMVKSLLQSGSEYYSTEWNLVTKTYEVYKNPNDYPQKEDFPNINAIIITGSKASATSDAPWIKKLISFVKDVLFKYPHIKIVGLCFGHQIVAKAAGVPIIQNPKGWEVSSTVVQLTENGEKFFGRKVININQMHQDMAVDVPEGFELLGSTEDCEFQIFYKPRQALTFQGHPEFSTEVVNTMVKVLRGTEVFTEQQKEEALKRSENPADNDFLAVSIVKFLLE.

The region spanning 13 to 217 (PMVEITSAYG…VKVLRGTEVF (205 aa)) is the Glutamine amidotransferase type-1 domain.

This chain is Putative glutamine amidotransferase-like protein C13C5.04, found in Schizosaccharomyces pombe (strain 972 / ATCC 24843) (Fission yeast).